We begin with the raw amino-acid sequence, 633 residues long: Glutamyl-tRNA(Gln) amidotransferase subunit E (633 aa).

Belongs to the GatB/GatE family. GatE subfamily. As to quaternary structure, heterodimer of GatD and GatE.

The catalysed reaction is L-glutamyl-tRNA(Gln) + L-glutamine + ATP + H2O = L-glutaminyl-tRNA(Gln) + L-glutamate + ADP + phosphate + H(+). Allows the formation of correctly charged Gln-tRNA(Gln) through the transamidation of misacylated Glu-tRNA(Gln) in organisms which lack glutaminyl-tRNA synthetase. The reaction takes place in the presence of glutamine and ATP through an activated gamma-phospho-Glu-tRNA(Gln). The GatDE system is specific for glutamate and does not act on aspartate. The polypeptide is Glutamyl-tRNA(Gln) amidotransferase subunit E (Methanosarcina acetivorans (strain ATCC 35395 / DSM 2834 / JCM 12185 / C2A)).